A 148-amino-acid polypeptide reads, in one-letter code: MSVLTAAEIMTLIPNRYPILFMDRVDELNPGESITCTKNVTINEEFFQGHFPGNPVMPGVLIIESLAQAASILILKSEQFQGETAYLGAIKQAKFRKVVRPGDVLSLYVEMVKQRSNMGTVKCTASVGEKVACSADLTFIVAAADDKI.

The active site involves His50.

The protein belongs to the thioester dehydratase family. FabZ subfamily.

It localises to the cytoplasm. The enzyme catalyses a (3R)-hydroxyacyl-[ACP] = a (2E)-enoyl-[ACP] + H2O. In terms of biological role, involved in unsaturated fatty acids biosynthesis. Catalyzes the dehydration of short chain beta-hydroxyacyl-ACPs and long chain saturated and unsaturated beta-hydroxyacyl-ACPs. The chain is 3-hydroxyacyl-[acyl-carrier-protein] dehydratase FabZ from Levilactobacillus brevis (strain ATCC 367 / BCRC 12310 / CIP 105137 / JCM 1170 / LMG 11437 / NCIMB 947 / NCTC 947) (Lactobacillus brevis).